The following is a 91-amino-acid chain: Signal recognition particle 19 kDa protein (91 aa).

It belongs to the SRP19 family. Part of the signal recognition particle protein translocation system, which is composed of SRP and FtsY. Archaeal SRP consists of a 7S RNA molecule of 300 nucleotides and two protein subunits: SRP54 and SRP19.

The protein localises to the cytoplasm. Functionally, involved in targeting and insertion of nascent membrane proteins into the cytoplasmic membrane. Binds directly to 7S RNA and mediates binding of the 54 kDa subunit of the SRP. This chain is Signal recognition particle 19 kDa protein, found in Methanoregula boonei (strain DSM 21154 / JCM 14090 / 6A8).